The primary structure comprises 250 residues: MGQKSNPNGLRLGIIRTWESKWYDVDKKVPFLVGEDFKIRTLIKNHYPKSTISQIEIKRLKKSNDEFIEIDLYTSKIGIIQGPENKNKNSLINKIEKLINKKVQINIFEVKAINKIAVLVAQNIAMQLQQRAFYKAVLKSAIQKALKSGIKGIKIIITGRLGGAEKARRDSISMGVVPLNTLRADIDYAFEEAHTTYGVLGVKVIINHGEVLPNKTIADTRQIFSSQYENKKNNNKRHFVDKKNFKKNTS.

The KH type-2 domain occupies 39–111; sequence IRTLIKNHYP…KVQINIFEVK (73 aa).

Belongs to the universal ribosomal protein uS3 family. Part of the 30S ribosomal subunit. Forms a tight complex with proteins S10 and S14.

Binds the lower part of the 30S subunit head. Binds mRNA in the 70S ribosome, positioning it for translation. The sequence is that of Small ribosomal subunit protein uS3 from Rubus stunt phytoplasma.